The sequence spans 321 residues: Phospho-N-acetylmuramoyl-pentapeptide-transferase (321 aa).

Transmembrane regions (helical) follow at residues 1-21 (MVYL…PVLI), 50-70 (MGGL…IIFI), 76-96 (IILL…DDYI), 112-132 (FLAQ…FNLT), 140-160 (IPFI…IVFW), 173-193 (GLDG…AIMA), 198-218 (ATSI…FLPF), 225-245 (VFMG…ISIM), 250-270 (LSLL…MIQV), and 300-320 (VVTV…WIGV).

Belongs to the glycosyltransferase 4 family. MraY subfamily. Mg(2+) is required as a cofactor.

The protein resides in the cell membrane. The enzyme catalyses UDP-N-acetyl-alpha-D-muramoyl-L-alanyl-gamma-D-glutamyl-L-lysyl-D-alanyl-D-alanine + di-trans,octa-cis-undecaprenyl phosphate = Mur2Ac(oyl-L-Ala-gamma-D-Glu-L-Lys-D-Ala-D-Ala)-di-trans,octa-cis-undecaprenyl diphosphate + UMP. Its pathway is cell wall biogenesis; peptidoglycan biosynthesis. Catalyzes the initial step of the lipid cycle reactions in the biosynthesis of the cell wall peptidoglycan: transfers peptidoglycan precursor phospho-MurNAc-pentapeptide from UDP-MurNAc-pentapeptide onto the lipid carrier undecaprenyl phosphate, yielding undecaprenyl-pyrophosphoryl-MurNAc-pentapeptide, known as lipid I. The protein is Phospho-N-acetylmuramoyl-pentapeptide-transferase of Staphylococcus saprophyticus subsp. saprophyticus (strain ATCC 15305 / DSM 20229 / NCIMB 8711 / NCTC 7292 / S-41).